Reading from the N-terminus, the 146-residue chain is Universal stress protein MTH_1154 (146 aa).

It belongs to the universal stress protein A family.

This Methanothermobacter thermautotrophicus (strain ATCC 29096 / DSM 1053 / JCM 10044 / NBRC 100330 / Delta H) (Methanobacterium thermoautotrophicum) protein is Universal stress protein MTH_1154.